Consider the following 150-residue polypeptide: MRAVIQRVSEASVTVDHKVCAVMRDGLLILLGIENEDNEEDIDWLCRKIINMRIFNDEDEVMNESLKSVDGDAIIVSQFTLHASTKKGNRPSYIKAAKPEVAEPLYLKFISKFQNELGKDVGSGIFGGDMKVSLLNDGPVTIIIDSKEKR.

Residues 138–139 carry the Gly-cisPro motif, important for rejection of L-amino acids motif; sequence GP.

The protein belongs to the DTD family. Homodimer.

It localises to the cytoplasm. The catalysed reaction is glycyl-tRNA(Ala) + H2O = tRNA(Ala) + glycine + H(+). It carries out the reaction a D-aminoacyl-tRNA + H2O = a tRNA + a D-alpha-amino acid + H(+). In terms of biological role, an aminoacyl-tRNA editing enzyme that deacylates mischarged D-aminoacyl-tRNAs. Also deacylates mischarged glycyl-tRNA(Ala), protecting cells against glycine mischarging by AlaRS. Acts via tRNA-based rather than protein-based catalysis; rejects L-amino acids rather than detecting D-amino acids in the active site. By recycling D-aminoacyl-tRNA to D-amino acids and free tRNA molecules, this enzyme counteracts the toxicity associated with the formation of D-aminoacyl-tRNA entities in vivo and helps enforce protein L-homochirality. This Christiangramia forsetii (strain DSM 17595 / CGMCC 1.15422 / KT0803) (Gramella forsetii) protein is D-aminoacyl-tRNA deacylase.